A 254-amino-acid polypeptide reads, in one-letter code: Dihydroanticapsin 7-dehydrogenase (254 aa).

9–31 (LITGGASGIGYAAVQAFLNQQAN) serves as a coordination point for NAD(+). A substrate-binding site is contributed by Ser-139. Residue Tyr-152 is the Proton acceptor of the active site.

The protein belongs to the short-chain dehydrogenases/reductases (SDR) family.

The catalysed reaction is L-dihydroanticapsin + NAD(+) = L-anticapsin + NADH + H(+). Its pathway is antibiotic biosynthesis; bacilysin biosynthesis. In terms of biological role, part of the bacABCDEFG operon responsible for the biosynthesis of bacilysin, an irreversible inactivator of the glutaminase domain of glucosamine synthetase. Catalyzes the dehydrogenation of the C7-hydroxyl group in the 4S-tetrahydrotyrosine (4S-H4Tyr) to yield anticapsin (epoxycyclohexanonyl-Ala). The polypeptide is Dihydroanticapsin 7-dehydrogenase (Bacillus amyloliquefaciens (Bacillus velezensis)).